The primary structure comprises 181 residues: Bifunctional protein PyrR (181 aa).

Residues Arg-39–Arg-40, Asp-104–Thr-112, Arg-137, and Val-161 each bind substrate. The PRPP-binding signature appears at Val-100–Thr-112.

The protein belongs to the purine/pyrimidine phosphoribosyltransferase family. PyrR subfamily.

The enzyme catalyses UMP + diphosphate = 5-phospho-alpha-D-ribose 1-diphosphate + uracil. In terms of biological role, regulates the transcription of the pyrimidine nucleotide (pyr) operon in response to exogenous pyrimidines. Also displays a weak uracil phosphoribosyltransferase activity which is not physiologically significant. This is Bifunctional protein PyrR from Pasteurella multocida (strain Pm70).